The following is a 317-amino-acid chain: SWI/SNF-related matrix-associated actin-dependent regulator of chromatin subfamily E member 1-related (317 aa).

Low complexity predominate over residues 1 to 17; sequence MSHGPKQPGAAAAPAGG. The interval 1-71 is disordered; the sequence is MSHGPKQPGA…RKKILPNGPK (71 aa). Lys31 is covalently cross-linked (Glycyl lysine isopeptide (Lys-Gly) (interchain with G-Cter in SUMO2)). The span at 31-52 shows a compositional bias: basic and acidic residues; sequence KQERGEGPRAGEKGSHEEEPVK. Residues 53-65 show a composition bias toward basic residues; it reads KRGWPKGKKRKKI. The HMG box DNA-binding region spans 70–138; it reads PKAPVTGYVR…QYMKELRAYQ (69 aa). Position 160 is a phosphoserine (Ser160). Positions 190–257 form a coiled coil; that stretch reads EEFLDQNKAR…LQQQLQAVRQ (68 aa).

Component of a BHC histone deacetylase complex that contains HDAC1, HDAC2, HMG20B/BRAF35, KDM1A, RCOR1/CoREST and PHF21A/BHC80. The BHC complex may also contain ZMYM2, ZNF217, ZMYM3, GSE1 and GTF2I. Interacts with the BRCA2 tumor suppressor protein. Interacts with DTNB. In terms of tissue distribution, ubiquitously expressed in adult tissues.

The protein localises to the nucleus. Its subcellular location is the chromosome. Its function is as follows. Required for correct progression through G2 phase of the cell cycle and entry into mitosis. Required for RCOR1/CoREST mediated repression of neuronal specific gene promoters. In Homo sapiens (Human), this protein is SWI/SNF-related matrix-associated actin-dependent regulator of chromatin subfamily E member 1-related (HMG20B).